The primary structure comprises 107 residues: uncharacterized protein (107 aa).

This is an uncharacterized protein from Microplitis demolitor (Parasitoid wasp).